Consider the following 468-residue polypeptide: Kynureninase 2 (468 aa).

Residues Leu134, Thr135, 162 to 165 (FPSD), Asp247, His250, and Tyr272 contribute to the pyridoxal 5'-phosphate site. The residue at position 273 (Lys273) is an N6-(pyridoxal phosphate)lysine. The pyridoxal 5'-phosphate site is built by Trp312 and Asn340.

Belongs to the kynureninase family. In terms of assembly, homodimer. Requires pyridoxal 5'-phosphate as cofactor.

It is found in the cytoplasm. The catalysed reaction is L-kynurenine + H2O = anthranilate + L-alanine + H(+). It carries out the reaction 3-hydroxy-L-kynurenine + H2O = 3-hydroxyanthranilate + L-alanine + H(+). The protein operates within amino-acid degradation; L-kynurenine degradation; L-alanine and anthranilate from L-kynurenine: step 1/1. It functions in the pathway cofactor biosynthesis; NAD(+) biosynthesis; quinolinate from L-kynurenine: step 2/3. Functionally, catalyzes the cleavage of L-kynurenine (L-Kyn) and L-3-hydroxykynurenine (L-3OHKyn) into anthranilic acid (AA) and 3-hydroxyanthranilic acid (3-OHAA), respectively. The sequence is that of Kynureninase 2 (bna5-2) from Aspergillus oryzae (strain ATCC 42149 / RIB 40) (Yellow koji mold).